We begin with the raw amino-acid sequence, 92 residues long: C-C motif chemokine 4 (92 aa).

A signal peptide spans 1–23 (MKLCVTVLSLLVLAAAFCSPALS). 2 disulfide bridges follow: C34–C58 and C35–C74.

Belongs to the intercrine beta (chemokine CC) family. Homodimer. Interacts with CCR5. In terms of tissue distribution, detected in peripheral blood mononuclear cells and lymph nodes.

Its subcellular location is the secreted. Functionally, monokine with inflammatory and chemokinetic properties. The protein is C-C motif chemokine 4 (CCL4) of Macaca mulatta (Rhesus macaque).